The primary structure comprises 408 residues: Imidazolonepropionase (408 aa).

His-73 and His-75 together coordinate Fe(3+). Residues His-73 and His-75 each coordinate Zn(2+). Arg-82, Tyr-145, and His-178 together coordinate 4-imidazolone-5-propanoate. Tyr-145 is an N-formimidoyl-L-glutamate binding site. A Fe(3+)-binding site is contributed by His-243. His-243 is a binding site for Zn(2+). Gln-246 is a binding site for 4-imidazolone-5-propanoate. Residue Asp-318 participates in Fe(3+) binding. Position 318 (Asp-318) interacts with Zn(2+). 2 residues coordinate N-formimidoyl-L-glutamate: Asn-320 and Gly-322. Ser-323 provides a ligand contact to 4-imidazolone-5-propanoate.

It belongs to the metallo-dependent hydrolases superfamily. HutI family. Zn(2+) serves as cofactor. Requires Fe(3+) as cofactor.

It is found in the cytoplasm. It catalyses the reaction 4-imidazolone-5-propanoate + H2O = N-formimidoyl-L-glutamate. It functions in the pathway amino-acid degradation; L-histidine degradation into L-glutamate; N-formimidoyl-L-glutamate from L-histidine: step 3/3. In terms of biological role, catalyzes the hydrolytic cleavage of the carbon-nitrogen bond in imidazolone-5-propanoate to yield N-formimidoyl-L-glutamate. It is the third step in the universal histidine degradation pathway. The chain is Imidazolonepropionase from Shewanella baltica (strain OS155 / ATCC BAA-1091).